The following is a 70-amino-acid chain: Large ribosomal subunit protein bL31 (70 aa).

The Zn(2+) site is built by Cys16, Cys18, Cys37, and Cys40.

The protein belongs to the bacterial ribosomal protein bL31 family. Type A subfamily. Part of the 50S ribosomal subunit. It depends on Zn(2+) as a cofactor.

In terms of biological role, binds the 23S rRNA. This Shewanella baltica (strain OS223) protein is Large ribosomal subunit protein bL31.